The sequence spans 269 residues: Sushi domain-containing protein 3 (269 aa).

A disordered region spans residues 1–23 (MRRTSATLRGRARPRWRAGNTTP). The Extracellular portion of the chain corresponds to 1-103 (MRRTSATLRG…VPPHETFGFK (103 aa)). Residues 30–93 (GTCAQLHPPP…WSSGSPVCKA (64 aa)) form the Sushi domain. Cystine bridges form between Cys-32–Cys-75 and Cys-61–Cys-91. Residues 104–124 (VAVIASIVSCAIILLMSMAFL) form a helical membrane-spanning segment. Over 125–269 (TCCLLKCVQK…PGRPKVYLPG (145 aa)) the chain is Cytoplasmic. A disordered region spans residues 171–237 (NNSSSVGGGN…RMGTPGPGGC (67 aa)). Gly residues predominate over residues 176 to 190 (VGGGNGGPSGGGGKP).

The protein resides in the cell membrane. The polypeptide is Sushi domain-containing protein 3 (Susd3) (Mus musculus (Mouse)).